We begin with the raw amino-acid sequence, 479 residues long: Signal recognition particle subunit SRP54 1 (479 aa).

The interval 1–295 is G-domain; that stretch reads MVLAELGGRI…DVKPFVSRLL (295 aa). GTP-binding positions include 108–115, 190–194, and 248–251; these read GLQGAGKT, DTSGR, and TKMD. Residues 296-479 form an M-domain region; sequence GKGDWSGLVD…MMGMFGGGGK (184 aa).

Belongs to the GTP-binding SRP family. SRP54 subfamily. As to quaternary structure, component of a signal recognition particle (SRP) complex that consists of a 7SL RNA molecule of 300 nucleotides and six protein subunits: SRP72, SRP68, SRP54, SRP19, SRP14 and SRP9.

The protein localises to the cytoplasm. Its subcellular location is the endoplasmic reticulum. It carries out the reaction GTP + H2O = GDP + phosphate + H(+). Functionally, component of the signal recognition particle (SRP) complex, a ribonucleoprotein complex that mediates the cotranslational targeting of secretory and membrane proteins to the endoplasmic reticulum (ER). As part of the SRP complex, associates with the SRP receptor (SR) component SRPRA to target secretory proteins to the endoplasmic reticulum membrane. Binds to the signal sequence of presecretory proteins when they emerge from the ribosomes. Displays basal GTPase activity, and stimulates reciprocal GTPase activation of the SR subunit SRPRA. Forms a guanosine 5'-triphosphate (GTP)-dependent complex with the SR subunit SRPRA. SR compaction and GTPase mediated rearrangement of SR drive SRP-mediated cotranslational protein translocation into the ER. Requires the presence of SRP9/SRP14 and/or SRP19 to stably interact with RNA. This chain is Signal recognition particle subunit SRP54 1 (SRP-54A), found in Arabidopsis thaliana (Mouse-ear cress).